The primary structure comprises 440 residues: Gamma-aminobutyric acid receptor subunit pi (440 aa).

An N-terminal signal peptide occupies residues 1-23 (MSYSLYLAFLCLSLLTQRTCIQG). Residues 24-241 (NQVNVEVSRS…LVLQFELRRN (218 aa)) are Extracellular-facing. N-linked (GlcNAc...) asparagine glycosylation is found at Asn43, Asn102, and Asn145. Cys160 and Cys174 are oxidised to a cystine. Residues Asn196 and Asn228 are each glycosylated (N-linked (GlcNAc...) asparagine). Residues 242–262 (VLYFILETYVPSTFLVVLSWV) form a helical membrane-spanning segment. Topologically, residues 263–270 (SFWISLDS) are cytoplasmic. Residues 271–290 (VPARTCIGVTTVLSMTTLMI) traverse the membrane as a helical segment. The Extracellular portion of the chain corresponds to 291 to 301 (GSRTSLPNTNC). A helical membrane pass occupies residues 302 to 322 (FIKAIDVYLGICFSFVFGALL). Topologically, residues 323–419 (EYAVAHYSSL…NPSNVDRYSK (97 aa)) are cytoplasmic. Residues 420–440 (LLFPLIFMLANVFYWAYYMYF) form a helical membrane-spanning segment.

This sequence belongs to the ligand-gated ion channel (TC 1.A.9) family. Gamma-aminobutyric acid receptor (TC 1.A.9.5) subfamily. GABRP sub-subfamily. As to quaternary structure, heteropentamer, formed by a combination of alpha (GABRA1-6), beta (GABRB1-3), gamma (GABRG1-3), delta (GABRD), epsilon (GABRE), rho (GABRR1-3), pi (GABRP) and theta (GABRQ) chains, each subunit exhibiting distinct physiological and pharmacological properties.

Its subcellular location is the cell membrane. It is found in the apical cell membrane. The enzyme catalyses chloride(in) = chloride(out). Pi subunit of the heteropentameric ligand-gated chloride channel gated by gamma-aminobutyric acid (GABA). GABA-gated chloride channels, also named GABA(A) receptors (GABAAR), consist of five subunits arranged around a central pore and contain GABA active binding site(s) located at the alpha and beta subunit interfaces. When activated by GABA, GABAARs selectively allow the flow of chloride anions across the cell membrane down their electrochemical gradient. Pi-containing GABAARs are mostly located in peripheral tissues. In the uterus, pi subunits modulate uterus contraction by altering the sensitivity of GABAARs to pregnanolone. In the lungs, pi-containing GABAARs contribute to pulmonary fluid transport via luminal secretion of chloride. This is Gamma-aminobutyric acid receptor subunit pi from Mus musculus (Mouse).